The sequence spans 517 residues: GMP synthase [glutamine-hydrolyzing] (517 aa).

The 192-residue stretch at 11–202 (KIIVLDYGSQ…AFDVCHAEAN (192 aa)) folds into the Glutamine amidotransferase type-1 domain. Cys88 functions as the Nucleophile in the catalytic mechanism. Active-site residues include His176 and Glu178. The 190-residue stretch at 203-392 (WSMDDFITKQ…LGMPHSLVWR (190 aa)) folds into the GMPS ATP-PPase domain. 230 to 236 (SGGVDSS) is an ATP binding site.

As to quaternary structure, homodimer.

It catalyses the reaction XMP + L-glutamine + ATP + H2O = GMP + L-glutamate + AMP + diphosphate + 2 H(+). It functions in the pathway purine metabolism; GMP biosynthesis; GMP from XMP (L-Gln route): step 1/1. In terms of biological role, catalyzes the synthesis of GMP from XMP. This chain is GMP synthase [glutamine-hydrolyzing] (guaA), found in Lacticaseibacillus rhamnosus (Lactobacillus rhamnosus).